A 1323-amino-acid chain; its full sequence is Sister chromatid cohesion protein PDS5 homolog A-B (1323 aa).

The stretch at 385–421 is one HEAT repeat; the sequence is FLVNDQLLGFVRERTLDKRWRVRKEAMMGLAQLYKKY. The interval 1138–1323 is disordered; sequence PLNATGRRPY…TAQRQIDLHR (186 aa). Residues 1153–1165 show a composition bias toward low complexity; that stretch reads SEISNNVSINSES. Polar residues-rich tracts occupy residues 1166 to 1176 and 1210 to 1220; these read DASVANRQSSE and LDQTAPSNTGT. Over residues 1235–1246 the composition is skewed to basic and acidic residues; that stretch reads NIRKESEEKKVD.

Interacts with the cohesin complex. Binds chromatin in a cohesin-dependent manner.

The protein localises to the nucleus. May regulate sister chromatid cohesion during mitosis and couple it to DNA replication. The chain is Sister chromatid cohesion protein PDS5 homolog A-B (pds5a-b) from Xenopus laevis (African clawed frog).